A 461-amino-acid chain; its full sequence is MSKNIYNNNAQNKRTNRSLYDDEDGPAHVLQTNDEDGTNKYKWENRFEKTWLTIDEDEHGLRPSNQEERNTRNRRLKNKDRDGILSQDQRVRRGMQRHLCLILDLSKTLSNQDLKPSRYQVLLQNVELFIKEFFDQNPISQLSIIITKNSKAEKISELSGNRLRHIQAMKDAIAMEGEPSIQNSLEVALSSLCYVPKYGSREVLFIFSSLTTCDPSSLQKTIQSLKNESIRVSFIHMAAELYICKAIAEQTNGTSKVILNEEHFNESLMLKCQPPPTIGKTEAALVEMGFPQQITSTVPSPCICHEKMKYSGYICPRCGVKSCELPTDCQICNLSLVSSPHLARSYHHLFQIPLFNEVNWKELNKNVTCIGCLSSSEKSILSLFFSCPRCQEIFCLDCDLFIHESLHNCPGCENKLQNTNTNTNGKTNGNEITNGNGNGNGNENENGNGNGNGNGNGNGLH.

Residues 1 to 13 (MSKNIYNNNAQNK) are compositionally biased toward polar residues. 2 disordered regions span residues 1-37 (MSKN…DEDG) and 61-83 (LRPS…DRDG). Over residues 61 to 71 (LRPSNQEERNT) the composition is skewed to basic and acidic residues. A VWFA domain is found at 98–275 (HLCLILDLSK…ESLMLKCQPP (178 aa)). The C4-type zinc finger occupies 315-332 (CPRCGVKSCELPTDCQIC). Residues 423–447 (TNGKTNGNEITNGNGNGNGNENENG) are compositionally biased toward low complexity. The segment at 423–461 (TNGKTNGNEITNGNGNGNGNENENGNGNGNGNGNGNGLH) is disordered. The segment at 434 to 459 (NGNGNGNGNENENGNGNGNGNGNGNG) is 13 X 2 tandem repeat of N-[GE]. The span at 448–461 (NGNGNGNGNGNGLH) shows a compositional bias: gly residues.

The protein belongs to the GTF2H2 family. In terms of assembly, component of the 7-subunit TFIIH core complex composed of XPB/repB, XPD/repD, gtf2h1, gtf2h2, gtf2h3, gtf2h4 and gtf2h5, which is active in NER. The core complex associates with the 3-subunit CDK-activating kinase (CAK) module composed of cycH/cyclin H, cdk7 and mnat1 to form the 10-subunit holoenzyme (holo-TFIIH) active in transcription.

The protein localises to the nucleus. Component of the general transcription and DNA repair factor IIH (TFIIH) core complex, which is involved in general and transcription-coupled nucleotide excision repair (NER) of damaged DNA and, when complexed to CAK, in RNA transcription by RNA polymerase II. In NER, TFIIH acts by opening DNA around the lesion to allow the excision of the damaged oligonucleotide and its replacement by a new DNA fragment. In transcription, TFIIH has an essential role in transcription initiation. When the pre-initiation complex (PIC) has been established, TFIIH is required for promoter opening and promoter escape. Phosphorylation of the C-terminal tail (CTD) of the largest subunit of RNA polymerase II by the kinase module CAK controls the initiation of transcription. This Dictyostelium discoideum (Social amoeba) protein is General transcription factor IIH subunit 2 (gtf2h2).